The sequence spans 383 residues: N-acetyldiaminopimelate deacetylase (383 aa).

Residue D75 is part of the active site. The active-site Proton acceptor is the E134.

The protein belongs to the peptidase M20A family. N-acetyldiaminopimelate deacetylase subfamily.

It catalyses the reaction N-acetyl-(2S,6S)-2,6-diaminopimelate + H2O = (2S,6S)-2,6-diaminopimelate + acetate. It participates in amino-acid biosynthesis; L-lysine biosynthesis via DAP pathway; LL-2,6-diaminopimelate from (S)-tetrahydrodipicolinate (acetylase route): step 3/3. Its function is as follows. Catalyzes the conversion of N-acetyl-diaminopimelate to diaminopimelate and acetate. The chain is N-acetyldiaminopimelate deacetylase from Lactobacillus acidophilus (strain ATCC 700396 / NCK56 / N2 / NCFM).